A 387-amino-acid polypeptide reads, in one-letter code: MASHPVFIDLSLDEQVQELRKFFKKLGAEISSEKSNKGVEDDLHKIIGVCEVCFKDGEPAQIDGILNSIVSIMITIPLDRGENIVLAYCEKMTKAPNQPLAKVCLQSLWRLFNNLDTASPLRYHVYYHLVQVAKQCDQVLEVFTGVDQLKSQFANCPPSSEQMQKLYRLLHDVTKDTNLELSSKVMIELLGTYTADNACVAREDAMKCIVTALADPNTFLLDPLLSLKPVRFLEGDLIHDLLSIFVSDKLPSYVQFYEDHKEFVNSQGLNHDQNMKKMRLLTFMQLAESYPEMSFDTLTKELQINDDEVEPFVIEVLKTKLVRARLDQANRKVHISSTMHRTFGAPQWEQLRDLLQAWKENLSSVREGLTNVSSAQLDLARTQKLIH.

In terms of domain architecture, PCI spans 181–340 (LSSKVMIELL…RKVHISSTMH (160 aa)).

This sequence belongs to the eIF-3 subunit M family. Component of the eukaryotic translation initiation factor 3 (eIF-3) complex. The eIF-3 complex interacts with pix.

The protein localises to the cytoplasm. It localises to the golgi apparatus. Functionally, component of the eukaryotic translation initiation factor 3 (eIF-3) complex, which is involved in protein synthesis of a specialized repertoire of mRNAs and, together with other initiation factors, stimulates binding of mRNA and methionyl-tRNAi to the 40S ribosome. The eIF-3 complex specifically targets and initiates translation of a subset of mRNAs involved in cell proliferation. The protein is Eukaryotic translation initiation factor 3 subunit M of Drosophila grimshawi (Hawaiian fruit fly).